Here is a 415-residue protein sequence, read N- to C-terminus: Putative glutamate--cysteine ligase 2 (415 aa).

This sequence belongs to the glutamate--cysteine ligase type 2 family. YbdK subfamily.

It catalyses the reaction L-cysteine + L-glutamate + ATP = gamma-L-glutamyl-L-cysteine + ADP + phosphate + H(+). Functionally, ATP-dependent carboxylate-amine ligase which exhibits weak glutamate--cysteine ligase activity. This chain is Putative glutamate--cysteine ligase 2, found in Bordetella petrii (strain ATCC BAA-461 / DSM 12804 / CCUG 43448).